The chain runs to 121 residues: Large ribosomal subunit protein bL20 (121 aa).

It belongs to the bacterial ribosomal protein bL20 family.

In terms of biological role, binds directly to 23S ribosomal RNA and is necessary for the in vitro assembly process of the 50S ribosomal subunit. It is not involved in the protein synthesizing functions of that subunit. This chain is Large ribosomal subunit protein bL20, found in Beijerinckia indica subsp. indica (strain ATCC 9039 / DSM 1715 / NCIMB 8712).